Consider the following 103-residue polypeptide: Astacin-like peptidase p16 (103 aa).

A Peptidase M12A domain is found at 1 to 103 (NAIPGQHYRW…DAFSRDGSPM (103 aa)).

It depends on Zn(2+) as a cofactor.

Its function is as follows. Active against casein. Has a role as a digestive enzyme. The protein is Astacin-like peptidase p16 of Argiope aurantia (Black-and-yellow garden spider).